We begin with the raw amino-acid sequence, 252 residues long: Oil body-associated protein 2A (252 aa).

Residues 1 to 31 (MASSDGKPLPTPASVGGGGGSSTAPPGQPTT) are disordered. Over residues 22–31 (STAPPGQPTT) the composition is skewed to low complexity.

This sequence belongs to the OBAP family.

The sequence is that of Oil body-associated protein 2A from Zea mays (Maize).